Consider the following 250-residue polypeptide: uncharacterized protein (250 aa).

The N-terminal stretch at 1–19 (MAKPRNAAESKAAKAQANA) is a signal peptide. 2 helical membrane-spanning segments follow: residues 51-71 (IGAF…AGGF) and 73-93 (MFTM…VIFG). The tract at residues 226-250 (AGVMPKGPLPTTAKMRSVQRTVRRK) is disordered.

Its subcellular location is the cell membrane. This is an uncharacterized protein from Mycobacterium tuberculosis (strain CDC 1551 / Oshkosh).